A 151-amino-acid chain; its full sequence is Large ribosomal subunit protein bL9 (151 aa).

Belongs to the bacterial ribosomal protein bL9 family.

In terms of biological role, binds to the 23S rRNA. This is Large ribosomal subunit protein bL9 from Chlorobium luteolum (strain DSM 273 / BCRC 81028 / 2530) (Pelodictyon luteolum).